Reading from the N-terminus, the 890-residue chain is DNA mismatch repair protein MutS (890 aa).

Position 645 to 652 (Gly645 to Ser652) interacts with ATP.

The protein belongs to the DNA mismatch repair MutS family.

Its function is as follows. This protein is involved in the repair of mismatches in DNA. It is possible that it carries out the mismatch recognition step. This protein has a weak ATPase activity. In Rickettsia conorii (strain ATCC VR-613 / Malish 7), this protein is DNA mismatch repair protein MutS.